A 235-amino-acid chain; its full sequence is UPF0173 metal-dependent hydrolase mll0680 (235 aa).

This sequence belongs to the UPF0173 family.

The polypeptide is UPF0173 metal-dependent hydrolase mll0680 (Mesorhizobium japonicum (strain LMG 29417 / CECT 9101 / MAFF 303099) (Mesorhizobium loti (strain MAFF 303099))).